Reading from the N-terminus, the 168-residue chain is Phosphopantetheine adenylyltransferase (168 aa).

Thr-10 lines the substrate pocket. ATP is bound by residues 10–11 (TF) and His-18. The substrate site is built by Lys-42, Leu-75, and Arg-89. ATP-binding positions include 90 to 92 (GVR), Glu-100, and 125 to 131 (YTYVASS).

This sequence belongs to the bacterial CoaD family. As to quaternary structure, homohexamer. Mg(2+) is required as a cofactor.

The protein localises to the cytoplasm. It catalyses the reaction (R)-4'-phosphopantetheine + ATP + H(+) = 3'-dephospho-CoA + diphosphate. It participates in cofactor biosynthesis; coenzyme A biosynthesis; CoA from (R)-pantothenate: step 4/5. Its function is as follows. Reversibly transfers an adenylyl group from ATP to 4'-phosphopantetheine, yielding dephospho-CoA (dPCoA) and pyrophosphate. The protein is Phosphopantetheine adenylyltransferase of Prosthecochloris aestuarii (strain DSM 271 / SK 413).